A 258-amino-acid chain; its full sequence is 6-carboxyhexanoate--CoA ligase (258 aa).

This sequence belongs to the BioW family. In terms of assembly, homodimer. Requires Mg(2+) as cofactor.

The enzyme catalyses heptanedioate + ATP + CoA = 6-carboxyhexanoyl-CoA + AMP + diphosphate. The protein operates within metabolic intermediate metabolism; pimeloyl-CoA biosynthesis; pimeloyl-CoA from pimelate: step 1/1. In terms of biological role, catalyzes the transformation of pimelate into pimeloyl-CoA with concomitant hydrolysis of ATP to AMP. The sequence is that of 6-carboxyhexanoate--CoA ligase from Bacillus atrophaeus (strain 1942).